Here is a 648-residue protein sequence, read N- to C-terminus: MINITFPDGAVREFESGVTTFEIAQSISNSLAKKALAGKFNGKLIDTTRVITEDGSIEIVTPDHEDALPILRHSAAHLFAQAARRLFPDIHLGVGPAIEDGFYYDTDNQAGQISNEDLPRIEEEMKKIVKENFPSIREEVTKDEAREIFKNDPYKLELIEEHSEDDGGLTIYRQGEYVDLCRGPHVPSTGRIQIFHLLNVAGAYWRGNSDNAMMQRIYGTAWFDKKDLKAYLKRLEEAKERDHRKLGKELDLFMISQEVGQGLPFWLPNGATIRRELERYIVDKEVAAGYQHVYTPPIASVELYKTSGHWDHYREDMFPPMDMGDGEEFVLRPMNCPHHIEVYKHHVHSYRELPIRIAEIGMMHRYEKSGALTGLQRVREMSLNDGHTFVAPEQIEEEFKKILQLIIDVYEDFNLTDYRFRLSYRDPADKHKYFDNDEMWENAQRMLKAAVDDMGVEYYEAEGEAAFYGPKLDIQVKTALGKEETLSTIQLDFLLPERFDLHYIGADGEEHRPVMIHRGVISTMERFTAILIENYKGAFPTWLAPHQVTLIPVSNEKHVDYAWEVAKKLRDRGVRAEVDERNEKMQFKIRASQTQKIPYQLIVGDKEMKDGTVNVRRYGQKQTHTETVSEFVENILADIARKSRPDAE.

One can recognise a TGS domain in the interval 1–61; the sequence is MINITFPDGA…TEDGSIEIVT (61 aa). A catalytic region spans residues 242 to 540; the sequence is DHRKLGKELD…LIENYKGAFP (299 aa). Cysteine 336, histidine 387, and histidine 517 together coordinate Zn(2+).

Belongs to the class-II aminoacyl-tRNA synthetase family. In terms of assembly, homodimer. Requires Zn(2+) as cofactor.

It localises to the cytoplasm. It carries out the reaction tRNA(Thr) + L-threonine + ATP = L-threonyl-tRNA(Thr) + AMP + diphosphate + H(+). Catalyzes the attachment of threonine to tRNA(Thr) in a two-step reaction: L-threonine is first activated by ATP to form Thr-AMP and then transferred to the acceptor end of tRNA(Thr). Also edits incorrectly charged L-seryl-tRNA(Thr). The chain is Threonine--tRNA ligase from Streptococcus thermophilus (strain ATCC BAA-250 / LMG 18311).